We begin with the raw amino-acid sequence, 387 residues long: 3-ketoacyl-CoA thiolase (387 aa).

Residue C91 is the Acyl-thioester intermediate of the active site. Catalysis depends on proton acceptor residues H343 and C373.

The protein belongs to the thiolase-like superfamily. Thiolase family. As to quaternary structure, heterotetramer of two alpha chains (FadB) and two beta chains (FadA).

The protein resides in the cytoplasm. It catalyses the reaction an acyl-CoA + acetyl-CoA = a 3-oxoacyl-CoA + CoA. It functions in the pathway lipid metabolism; fatty acid beta-oxidation. In terms of biological role, catalyzes the final step of fatty acid oxidation in which acetyl-CoA is released and the CoA ester of a fatty acid two carbons shorter is formed. The protein is 3-ketoacyl-CoA thiolase of Idiomarina loihiensis (strain ATCC BAA-735 / DSM 15497 / L2-TR).